Consider the following 2454-residue polypeptide: Probable serine/threonine-protein kinase DDB_G0277071 (2454 aa).

The segment covering 31–51 (TSSLTTTTTTTTTTTTTTSTT) has biased composition (low complexity). Disordered stretches follow at residues 31–57 (TSSLTTTTTTTTTTTTTTSTTHNHESN), 206–265 (QQQL…QKQN), 340–612 (PRPP…LKIE), 963–1051 (NNIN…NENE), 1201–1330 (SSDD…SNPL), and 1342–1528 (ISKG…SNNT). A coiled-coil region spans residues 259–307 (KQQQKQNSQQQQQQQQQQQQQQQQQQQQQQQQQQQQQQQQQQQKLNIHE). Low complexity-rich tracts occupy residues 346 to 399 (QQHQ…NITP) and 406 to 428 (PSSVTSPISTSTNPPSNNPKPTS). The segment covering 429-444 (IGQIQSLHYHNPSLYQ) has biased composition (polar residues). Composition is skewed to low complexity over residues 450–461 (NRNRGNNNNNNN) and 475–536 (SSTV…NTPN). The segment covering 553–568 (GGIGGGGGGGSGGGGI) has biased composition (gly residues). Low complexity-rich tracts occupy residues 963–1048 (NNIN…TTTN), 1201–1248 (SSDD…TGGP), 1275–1284 (NSSNNNNTSS), 1299–1324 (SGSSTSSPSTLISTPSTLASTPPTTG), and 1346–1403 (SPAS…SVST). Polar residues predominate over residues 1417–1441 (LNLSSVSKTGQASTSTPNLLNLKNI). Positions 1442 to 1478 (PTTTNNSNSTTTTTTTTPTGKPQFSLNLSSLSKSSSS) are enriched in low complexity. Polar residues predominate over residues 1479–1491 (TETVPPSQPNQPI). Residues 1509 to 1528 (STTTTTTTTTPPPINNSNNT) show a composition bias toward low complexity. One can recognise a Protein kinase domain in the interval 1730 to 2034 (FKDLKRVAKG…TKFIAIKPTI (305 aa)). ATP-binding positions include 1736-1744 (VAKGAYGTV) and Lys1760. Asp1858 acts as the Proton acceptor in catalysis. The region spanning 2130–2271 (RPSKVASFMY…LCRWGKQRRN (142 aa)) is the Tyrosine-protein phosphatase domain. A disordered region spans residues 2379–2404 (NINNNNNNNSNNSKSKQQQQQQQNQN).

It belongs to the protein kinase superfamily. Ser/Thr protein kinase family.

The enzyme catalyses L-seryl-[protein] + ATP = O-phospho-L-seryl-[protein] + ADP + H(+). It catalyses the reaction L-threonyl-[protein] + ATP = O-phospho-L-threonyl-[protein] + ADP + H(+). This chain is Probable serine/threonine-protein kinase DDB_G0277071, found in Dictyostelium discoideum (Social amoeba).